We begin with the raw amino-acid sequence, 106 residues long: Iron-sulfur cluster assembly protein CyaY (106 aa).

Belongs to the frataxin family.

Its function is as follows. Involved in iron-sulfur (Fe-S) cluster assembly. May act as a regulator of Fe-S biogenesis. This Salmonella newport (strain SL254) protein is Iron-sulfur cluster assembly protein CyaY.